A 206-amino-acid chain; its full sequence is MSNESIKAEQDLIQEGVESEVSTAEASLVDELTQANFRIEELEQLLADALAKVEEQKDSVIRAAAEVDNIRRRAAMDVEKANKFALEKFANELLPVLDNMERALMGTNPEDEATKAIYQGVELTQKSLLTAVAKFGVKQIDPQGESFNPDQHQAIGMQPSADFPANTVMLVMQKGYELNSRLLRPAMVMVSQGGPSQETATIDIEA.

This sequence belongs to the GrpE family. As to quaternary structure, homodimer.

The protein resides in the cytoplasm. Functionally, participates actively in the response to hyperosmotic and heat shock by preventing the aggregation of stress-denatured proteins, in association with DnaK and GrpE. It is the nucleotide exchange factor for DnaK and may function as a thermosensor. Unfolded proteins bind initially to DnaJ; upon interaction with the DnaJ-bound protein, DnaK hydrolyzes its bound ATP, resulting in the formation of a stable complex. GrpE releases ADP from DnaK; ATP binding to DnaK triggers the release of the substrate protein, thus completing the reaction cycle. Several rounds of ATP-dependent interactions between DnaJ, DnaK and GrpE are required for fully efficient folding. The polypeptide is Protein GrpE (Shewanella sp. (strain W3-18-1)).